The sequence spans 503 residues: Aspartyl/glutamyl-tRNA(Asn/Gln) amidotransferase subunit B (503 aa).

This sequence belongs to the GatB/GatE family. GatB subfamily. In terms of assembly, heterotrimer of A, B and C subunits.

The enzyme catalyses L-glutamyl-tRNA(Gln) + L-glutamine + ATP + H2O = L-glutaminyl-tRNA(Gln) + L-glutamate + ADP + phosphate + H(+). The catalysed reaction is L-aspartyl-tRNA(Asn) + L-glutamine + ATP + H2O = L-asparaginyl-tRNA(Asn) + L-glutamate + ADP + phosphate + 2 H(+). Functionally, allows the formation of correctly charged Asn-tRNA(Asn) or Gln-tRNA(Gln) through the transamidation of misacylated Asp-tRNA(Asn) or Glu-tRNA(Gln) in organisms which lack either or both of asparaginyl-tRNA or glutaminyl-tRNA synthetases. The reaction takes place in the presence of glutamine and ATP through an activated phospho-Asp-tRNA(Asn) or phospho-Glu-tRNA(Gln). This is Aspartyl/glutamyl-tRNA(Asn/Gln) amidotransferase subunit B from Roseobacter denitrificans (strain ATCC 33942 / OCh 114) (Erythrobacter sp. (strain OCh 114)).